A 115-amino-acid polypeptide reads, in one-letter code: Large ribosomal subunit protein uL18 (115 aa).

It belongs to the universal ribosomal protein uL18 family. Part of the 50S ribosomal subunit; part of the 5S rRNA/L5/L18/L25 subcomplex. Contacts the 5S and 23S rRNAs.

Its function is as follows. This is one of the proteins that bind and probably mediate the attachment of the 5S RNA into the large ribosomal subunit, where it forms part of the central protuberance. This chain is Large ribosomal subunit protein uL18, found in Baumannia cicadellinicola subsp. Homalodisca coagulata.